Here is a 1165-residue protein sequence, read N- to C-terminus: Tectonin beta-propeller repeat-containing protein 1 (1165 aa).

4 TECPR repeats span residues 209–240, 254–285, 301–332, and 344–376; these read LSVW…SLLD, DLLW…SIVE, SVVW…IEMV, and DQVW…KAIV. The disordered stretch occupies residues 404-486; sequence RGSGESAPSD…GPATTPAELP (83 aa). A PH domain is found at 611–717; that stretch reads KTGALQWWCD…WLALLSLSCC (107 aa). One copy of the TECPR 5 repeat lies at 729–756; the sequence is QAIWSITCKGDIFVSEPSPDLEAHEHPL. Residues Ser938 and Ser949 each carry the phosphoserine modification. TECPR repeat units follow at residues 953 to 984, 998 to 1029, 1044 to 1075, and 1087 to 1127; these read IALW…LHVG, YQVW…YHIP, TSVY…EHVS, and DQVW…DYGI. The disordered stretch occupies residues 1140–1165; the sequence is ATRAPRSSSQEQEPSAPPEAHDPVCC. A compositionally biased stretch (low complexity) spans 1143–1153; that stretch reads APRSSSQEQEP.

Belongs to the TECPR1 family. In terms of assembly, interacts with ATG5; the interaction is direct. Interacts with WIPI2. Interacts with the ATG5-ATG12 conjugate, the interaction is however mutually exclusive with ATG16, since it does not interact with ATG12-ATG5-ATG16 complex.

It localises to the cytoplasmic vesicle. Its subcellular location is the autophagosome membrane. The protein resides in the lysosome membrane. In terms of biological role, tethering factor involved in autophagy. Involved in autophagosome maturation by promoting the autophagosome fusion with lysosomes: acts by associating with both the ATG5-ATG12 conjugate and phosphatidylinositol-3-phosphate (PtdIns(3)P) present at the surface of autophagosomes. Also involved in selective autophagy against bacterial pathogens, by being required for phagophore/preautophagosomal structure biogenesis and maturation. The protein is Tectonin beta-propeller repeat-containing protein 1 (TECPR1) of Pongo abelii (Sumatran orangutan).